The primary structure comprises 423 residues: G-protein coupled receptor 83 (423 aa).

Positions 1-16 (MVPHLLLLCLLPLVRA) are cleaved as a signal peptide. Over 18 to 71 (EPHEGRADEQSAEAALAVPNASHFFSWNNYTFSDWQNFVGRRRYGAESQNPTVK) the chain is Extracellular. N-linked (GlcNAc...) asparagine glycosylation is found at asparagine 37 and asparagine 46. Residues 72-92 (ALLIVAYSFIIVFSLFGNVLV) traverse the membrane as a helical segment. The Cytoplasmic portion of the chain corresponds to 93-107 (CHVIFKNQRMHSATS). Residues 108–129 (LFIVNLAVADIMITLLNTPFTL) traverse the membrane as a helical segment. Over 130–145 (VRFVNSTWIFGKGMCH) the chain is Extracellular. The N-linked (GlcNAc...) asparagine glycan is linked to asparagine 134. Cysteine 144 and cysteine 224 are oxidised to a cystine. A helical membrane pass occupies residues 146–167 (VSRFAQYCSLHVSALTLTAIAV). Topologically, residues 168–186 (DRHQVIMHPLKPRISITKG) are cytoplasmic. The chain crosses the membrane as a helical span at residues 187–208 (VIYIAVIWTMATFFSLPHAICQ). Residues 209–238 (KLFTFKYSEDIVRSLCLPDFPEPADLFWKY) lie on the Extracellular side of the membrane. Residues 239 to 260 (LDLATFILLYILPLLIISVAYA) traverse the membrane as a helical segment. The Cytoplasmic portion of the chain corresponds to 261-293 (RVAKKLWLCNMIGDVTTEQYFALRRKKKKTIKM). Residues 294–315 (LMLVVVLFALCWFPLNCYVLLL) form a helical membrane-spanning segment. Residues 316–327 (SSKVIRTNNALY) lie on the Extracellular side of the membrane. The helical transmembrane segment at 328-348 (FAFHWFAMSSTCYNPFIYCWL) threads the bilayer. Over 349–423 (NENFRIELKA…SSVEPIVTMS (75 aa)) the chain is Cytoplasmic. Polar residues predominate over residues 402 to 414 (PTSQLQSGKTDLS). The segment at 402–423 (PTSQLQSGKTDLSSVEPIVTMS) is disordered.

Belongs to the G-protein coupled receptor 1 family. Highly expressed in the brain and spinal cord, and found in lower concentrations in the thymus and other tissues.

The protein localises to the cell membrane. Its function is as follows. G-protein coupled receptor for PEN, a neuropeptide produced from the precursor protein, proSAAS (encoded by PCSK1N). Acts through a G(i)- and G(q)-alpha-alpha-mediated pathway in response to PEN. Plays a role in food intake and body weight regulation. May contribute to the regulation of anxiety-related behaviors. This Homo sapiens (Human) protein is G-protein coupled receptor 83.